We begin with the raw amino-acid sequence, 130 residues long: Phosphoribosyl-AMP cyclohydrolase (130 aa).

Residue Asp-77 participates in Mg(2+) binding. Zn(2+) is bound at residue Cys-78. Asp-79 and Asp-81 together coordinate Mg(2+). Zn(2+) is bound by residues Cys-95 and Cys-102.

It belongs to the PRA-CH family. As to quaternary structure, homodimer. Mg(2+) is required as a cofactor. Requires Zn(2+) as cofactor.

It is found in the cytoplasm. It catalyses the reaction 1-(5-phospho-beta-D-ribosyl)-5'-AMP + H2O = 1-(5-phospho-beta-D-ribosyl)-5-[(5-phospho-beta-D-ribosylamino)methylideneamino]imidazole-4-carboxamide. It participates in amino-acid biosynthesis; L-histidine biosynthesis; L-histidine from 5-phospho-alpha-D-ribose 1-diphosphate: step 3/9. In terms of biological role, catalyzes the hydrolysis of the adenine ring of phosphoribosyl-AMP. This is Phosphoribosyl-AMP cyclohydrolase from Pseudomonas putida (strain ATCC 700007 / DSM 6899 / JCM 31910 / BCRC 17059 / LMG 24140 / F1).